A 469-amino-acid chain; its full sequence is Cysteine--tRNA ligase (469 aa).

Cys-28 serves as a coordination point for Zn(2+). Positions Pro-30 to Asn-40 match the 'HIGH' region motif. Zn(2+)-binding residues include Cys-213, His-238, and Glu-242. A 'KMSKS' region motif is present at residues Lys-270–Ser-274. Lys-273 contacts ATP.

Belongs to the class-I aminoacyl-tRNA synthetase family. Monomer. Zn(2+) serves as cofactor.

It is found in the cytoplasm. It catalyses the reaction tRNA(Cys) + L-cysteine + ATP = L-cysteinyl-tRNA(Cys) + AMP + diphosphate. In Leuconostoc citreum (strain KM20), this protein is Cysteine--tRNA ligase.